Here is a 220-residue protein sequence, read N- to C-terminus: Adenylate kinase (220 aa).

Residue 12–17 (GAGKGT) coordinates ATP. Positions 32–62 (STGDIFRDIVKKENDELGKKIKEIMEKGELV) are NMP. AMP contacts are provided by residues threonine 33, arginine 38, 60–62 (ELV), 88–91 (GYPR), and glutamine 95. An LID region spans residues 129–166 (SRRICPKCGRIYNMISLPPKEDELCDDCKVKLVQRDDD). Arginine 130 provides a ligand contact to ATP. Zn(2+) contacts are provided by cysteine 133 and cysteine 136. 139–140 (IY) provides a ligand contact to ATP. Residues cysteine 153 and cysteine 156 each coordinate Zn(2+). 2 residues coordinate AMP: arginine 163 and arginine 174. Isoleucine 202 serves as a coordination point for ATP.

This sequence belongs to the adenylate kinase family. As to quaternary structure, monomer.

It is found in the cytoplasm. The enzyme catalyses AMP + ATP = 2 ADP. The protein operates within purine metabolism; AMP biosynthesis via salvage pathway; AMP from ADP: step 1/1. Its function is as follows. Catalyzes the reversible transfer of the terminal phosphate group between ATP and AMP. Plays an important role in cellular energy homeostasis and in adenine nucleotide metabolism. The polypeptide is Adenylate kinase (Thermotoga neapolitana).